The sequence spans 355 residues: uncharacterized protein (355 aa).

A J domain is found at 9–75; the sequence is DYYDILNISV…KLREKYDKLG (67 aa).

The protein belongs to the DnaJ family.

It localises to the cytoplasm. This is an uncharacterized protein from Schizosaccharomyces pombe (strain 972 / ATCC 24843) (Fission yeast).